Consider the following 441-residue polypeptide: 3-phosphoshikimate 1-carboxyvinyltransferase (441 aa).

Residues 1–21 (MSANGPSHPARELKAGGSLSG) are disordered. Positions 29, 30, and 34 each coordinate 3-phosphoshikimate. Lys-29 lines the phosphoenolpyruvate pocket. Residues Gly-103 and Arg-132 each coordinate phosphoenolpyruvate. The 3-phosphoshikimate site is built by Ser-177, Gln-179, Asp-328, and Lys-355. Position 179 (Gln-179) interacts with phosphoenolpyruvate. Residue Asp-328 is the Proton acceptor of the active site. Phosphoenolpyruvate contacts are provided by Arg-359 and Arg-401.

It belongs to the EPSP synthase family. Monomer.

Its subcellular location is the cytoplasm. It carries out the reaction 3-phosphoshikimate + phosphoenolpyruvate = 5-O-(1-carboxyvinyl)-3-phosphoshikimate + phosphate. Its pathway is metabolic intermediate biosynthesis; chorismate biosynthesis; chorismate from D-erythrose 4-phosphate and phosphoenolpyruvate: step 6/7. Its function is as follows. Catalyzes the transfer of the enolpyruvyl moiety of phosphoenolpyruvate (PEP) to the 5-hydroxyl of shikimate-3-phosphate (S3P) to produce enolpyruvyl shikimate-3-phosphate and inorganic phosphate. The protein is 3-phosphoshikimate 1-carboxyvinyltransferase of Parasynechococcus marenigrum (strain WH8102).